The following is a 644-amino-acid chain: Threonine--tRNA ligase (644 aa).

Positions 1–61 (MNVSIEGQML…DGTTTIEPVY (61 aa)) constitute a TGS domain. Residues 241-532 (DHRKLGQQLD…LIEQYAGAFP (292 aa)) are catalytic. Residues Cys333, His384, and His509 each contribute to the Zn(2+) site.

It belongs to the class-II aminoacyl-tRNA synthetase family. In terms of assembly, homodimer. Requires Zn(2+) as cofactor.

Its subcellular location is the cytoplasm. The catalysed reaction is tRNA(Thr) + L-threonine + ATP = L-threonyl-tRNA(Thr) + AMP + diphosphate + H(+). Its function is as follows. Catalyzes the attachment of threonine to tRNA(Thr) in a two-step reaction: L-threonine is first activated by ATP to form Thr-AMP and then transferred to the acceptor end of tRNA(Thr). Also edits incorrectly charged L-seryl-tRNA(Thr). The chain is Threonine--tRNA ligase from Nitratidesulfovibrio vulgaris (strain ATCC 29579 / DSM 644 / CCUG 34227 / NCIMB 8303 / VKM B-1760 / Hildenborough) (Desulfovibrio vulgaris).